The chain runs to 226 residues: 3-dehydroquinate dehydratase (226 aa).

3-dehydroquinate-binding positions include 33-35 and Arg-65; that span reads EWR. Catalysis depends on His-121, which acts as the Proton donor/acceptor. Catalysis depends on Lys-146, which acts as the Schiff-base intermediate with substrate. 3 residues coordinate 3-dehydroquinate: Arg-188, Ser-207, and Gln-211.

This sequence belongs to the type-I 3-dehydroquinase family. As to quaternary structure, homodimer.

The enzyme catalyses 3-dehydroquinate = 3-dehydroshikimate + H2O. Its pathway is metabolic intermediate biosynthesis; chorismate biosynthesis; chorismate from D-erythrose 4-phosphate and phosphoenolpyruvate: step 3/7. Involved in the third step of the chorismate pathway, which leads to the biosynthesis of aromatic amino acids. Catalyzes the cis-dehydration of 3-dehydroquinate (DHQ) and introduces the first double bond of the aromatic ring to yield 3-dehydroshikimate. In Lactococcus lactis subsp. lactis (strain IL1403) (Streptococcus lactis), this protein is 3-dehydroquinate dehydratase.